Here is a 470-residue protein sequence, read N- to C-terminus: Zinc finger CCCH domain-containing protein 7 (470 aa).

The disordered stretch occupies residues 122–144 (AYSKKESEKQSGQNNTSTASRNH). The segment covering 131–142 (QSGQNNTSTASR) has biased composition (polar residues). 5 consecutive C3H1-type zinc fingers follow at residues 240 to 269 (AKKK…HDPS), 273 to 294 (VCTK…HKVI), 295 to 321 (PERM…HVHV), 322 to 349 (NPIA…HSYN), and 350 to 372 (CPVF…HPKN). A compositionally biased stretch (basic residues) spans 370–381 (PKNQSKGRKRKR). The segment at 370–389 (PKNQSKGRKRKRTNEPSQKN) is disordered.

In terms of biological role, possesses RNA-binding and ribonuclease activities in vitro. The sequence is that of Zinc finger CCCH domain-containing protein 7 from Arabidopsis thaliana (Mouse-ear cress).